The sequence spans 122 residues: uncharacterized protein (122 aa).

Residues 1 to 15 (MAEPGGRGDYHKDGR) show a composition bias toward basic and acidic residues. Residues 1–26 (MAEPGGRGDYHKDGRPPSLSRSPLFT) are disordered.

This is an uncharacterized protein from Macaca fascicularis (Crab-eating macaque).